Reading from the N-terminus, the 240-residue chain is Hairy and enhancer of split-related protein HELT (240 aa).

Positions 10–65 (RTPVSHKVIEKRRRDRINRCLNELGKTVPMALAKQSSGKLEKAEILEMTVQYLRAL) constitute a bHLH domain. The residue at position 48 (K48) is an N6-acetyllysine. Residues 86–121 (FHYGYHECMKNLVHYLTTVERMETKDTKYARILAFL) enclose the Orange domain.

This sequence belongs to the HEY family. Self-associates. Interacts with HES5 and HEY2. In terms of tissue distribution, expressed in heart and testis.

It localises to the nucleus. In terms of biological role, transcriptional repressor which binds preferentially to the canonical E box sequence 5'-CACGCG-3'. Required for the development of GABAergic neurons. The protein is Hairy and enhancer of split-related protein HELT (Helt) of Mus musculus (Mouse).